Reading from the N-terminus, the 219-residue chain is Thiamine-phosphate synthase (219 aa).

4-amino-2-methyl-5-(diphosphooxymethyl)pyrimidine is bound by residues 44–48 (QFREK) and N79. Positions 80 and 99 each coordinate Mg(2+). S117 lines the 4-amino-2-methyl-5-(diphosphooxymethyl)pyrimidine pocket. 143–145 (TST) serves as a coordination point for 2-[(2R,5Z)-2-carboxy-4-methylthiazol-5(2H)-ylidene]ethyl phosphate. K146 is a binding site for 4-amino-2-methyl-5-(diphosphooxymethyl)pyrimidine. 2-[(2R,5Z)-2-carboxy-4-methylthiazol-5(2H)-ylidene]ethyl phosphate is bound by residues G175 and 195 to 196 (IS).

It belongs to the thiamine-phosphate synthase family. Requires Mg(2+) as cofactor.

The catalysed reaction is 2-[(2R,5Z)-2-carboxy-4-methylthiazol-5(2H)-ylidene]ethyl phosphate + 4-amino-2-methyl-5-(diphosphooxymethyl)pyrimidine + 2 H(+) = thiamine phosphate + CO2 + diphosphate. It carries out the reaction 2-(2-carboxy-4-methylthiazol-5-yl)ethyl phosphate + 4-amino-2-methyl-5-(diphosphooxymethyl)pyrimidine + 2 H(+) = thiamine phosphate + CO2 + diphosphate. It catalyses the reaction 4-methyl-5-(2-phosphooxyethyl)-thiazole + 4-amino-2-methyl-5-(diphosphooxymethyl)pyrimidine + H(+) = thiamine phosphate + diphosphate. The protein operates within cofactor biosynthesis; thiamine diphosphate biosynthesis; thiamine phosphate from 4-amino-2-methyl-5-diphosphomethylpyrimidine and 4-methyl-5-(2-phosphoethyl)-thiazole: step 1/1. Its function is as follows. Condenses 4-methyl-5-(beta-hydroxyethyl)thiazole monophosphate (THZ-P) and 2-methyl-4-amino-5-hydroxymethyl pyrimidine pyrophosphate (HMP-PP) to form thiamine monophosphate (TMP). The sequence is that of Thiamine-phosphate synthase from Bacillus cereus (strain ZK / E33L).